The sequence spans 217 residues: Probable ribonuclease P protein subunit 1 (217 aa).

The protein belongs to the eukaryotic/archaeal RNase P protein component 1 family.

The protein resides in the nucleus. It localises to the nucleolus. The catalysed reaction is Endonucleolytic cleavage of RNA, removing 5'-extranucleotides from tRNA precursor.. Its function is as follows. Part of ribonuclease P, a protein complex that generates mature tRNA molecules by cleaving their 5'-ends. In Schizosaccharomyces pombe (strain 972 / ATCC 24843) (Fission yeast), this protein is Probable ribonuclease P protein subunit 1.